Reading from the N-terminus, the 537-residue chain is CTP synthase (537 aa).

An amidoligase domain region spans residues 1-268 (MPFKCIFLTG…ANFIGEKLKL (268 aa)). Residue serine 14 participates in CTP binding. Serine 14 contacts UTP. ATP contacts are provided by residues 15–20 (SLGKGL) and aspartate 72. Mg(2+)-binding residues include aspartate 72 and glutamate 142. CTP contacts are provided by residues 149-151 (DIE), 188-193 (KSKPTQ), and lysine 224. UTP is bound by residues 188-193 (KSKPTQ) and lysine 224. Residues 293–533 (KIGVVGKYVQ…IEAALVYSKD (241 aa)) enclose the Glutamine amidotransferase type-1 domain. An L-glutamine-binding site is contributed by glycine 352. Cysteine 379 serves as the catalytic Nucleophile; for glutamine hydrolysis. L-glutamine-binding positions include 380–383 (LGMQ), glutamate 403, and arginine 461. Active-site residues include histidine 506 and glutamate 508.

This sequence belongs to the CTP synthase family. As to quaternary structure, homotetramer.

It catalyses the reaction UTP + L-glutamine + ATP + H2O = CTP + L-glutamate + ADP + phosphate + 2 H(+). The catalysed reaction is L-glutamine + H2O = L-glutamate + NH4(+). It carries out the reaction UTP + NH4(+) + ATP = CTP + ADP + phosphate + 2 H(+). The protein operates within pyrimidine metabolism; CTP biosynthesis via de novo pathway; CTP from UDP: step 2/2. Allosterically activated by GTP, when glutamine is the substrate; GTP has no effect on the reaction when ammonia is the substrate. The allosteric effector GTP functions by stabilizing the protein conformation that binds the tetrahedral intermediate(s) formed during glutamine hydrolysis. Inhibited by the product CTP, via allosteric rather than competitive inhibition. Its function is as follows. Catalyzes the ATP-dependent amination of UTP to CTP with either L-glutamine or ammonia as the source of nitrogen. Regulates intracellular CTP levels through interactions with the four ribonucleotide triphosphates. The polypeptide is CTP synthase (Chlamydia pneumoniae (Chlamydophila pneumoniae)).